A 446-amino-acid chain; its full sequence is Radical S-adenosyl methionine domain-containing protein 1, mitochondrial (446 aa).

The 263-residue stretch at 15–277 (KGYNKLKDLP…VCEAEAMGFQ (263 aa)) folds into the Radical SAM core domain. Positions 34, 38, and 41 each coordinate [4Fe-4S] cluster. Residues Gly94, 95 to 96 (GT), Glu130, Gln159, Arg171, and Asp195 each bind S-adenosyl-L-methionine.

This sequence belongs to the anaerobic coproporphyrinogen-III oxidase family. HemW subfamily.

It is found in the mitochondrion. Functionally, may be a heme chaperone, appears to bind heme. Homologous bacterial proteins do not have oxygen-independent coproporphyrinogen-III oxidase activity. Binds 1 [4Fe-4S] cluster. The cluster is coordinated with 3 cysteines and an exchangeable S-adenosyl-L-methionine. This Dictyostelium discoideum (Social amoeba) protein is Radical S-adenosyl methionine domain-containing protein 1, mitochondrial (rsad1).